The sequence spans 346 residues: Histone PARylation factor 1 (346 aa).

N-acetylmethionine is present on Met1. N6-acetyllysine is present on residues Lys19, Lys186, and Lys233. Residue Asp235 is modified to PolyADP-ribosyl aspartic acid. An ADP-ribosyltyrosine modification is found at Tyr238. Glu240 is subject to PolyADP-ribosyl glutamic acid. The interval 242–346 (PETDADLKRI…SEENIDQLAG (105 aa)) is interaction with PARP1. The active-site Proton donor is the Glu284.

This sequence belongs to the HPF1 family. Interacts with PARP1 (via the PARP catalytic domain). Interacts with PARP2 (via the PARP catalytic domain). Interacts with core nucleosomes in a PARP1- and PARP2-dependent manner.

Its subcellular location is the chromosome. The protein localises to the nucleus. In terms of biological role, cofactor for serine ADP-ribosylation that confers serine specificity on PARP1 and PARP2 and plays a key role in DNA damage response. Initiates the repair of double-strand DNA breaks: recruited to DNA damage sites by PARP1 and PARP2 and switches the amino acid specificity of PARP1 and PARP2 from aspartate or glutamate to serine residues, licensing serine ADP-ribosylation of target proteins. Serine ADP-ribosylation of target proteins, such as histones, promotes decompaction of chromatin and the recruitment of repair factors leading to the reparation of DNA strand breaks. Serine ADP-ribosylation of proteins constitutes the primary form of ADP-ribosylation of proteins in response to DNA damage. HPF1 acts by completing the active site of PARP1 and PARP2: forms a composite active site composed of residues from HPF1 and PARP1 or PARP2. While HPF1 promotes the initiation of serine ADP-ribosylation, it restricts the polymerase activity of PARP1 and PARP2 in order to limit the length of poly-ADP-ribose chains. HPF1 also promotes tyrosine ADP-ribosylation, probably by conferring tyrosine specificity on PARP1. The chain is Histone PARylation factor 1 from Mus musculus (Mouse).